We begin with the raw amino-acid sequence, 279 residues long: MKNFFSFSKLTPHLKNIYHRNMTYTTKQVGETGSLEYRLFFLKDNKPVSSFHDVPLWVNKEKQIVNMLVEIPRGTNAKLEIATKEYMNPIKQDVKDGKLRFVHDKYPFNYGALPQTWESPEHTHPSTGAKGDNDPLDACEIGSGQGVTGEFKQVKVLGVFAMIDAGETDWKILCIDVNDPIASQINSQEDIEKHLPGKINEVYTFLRDYKIPDGKGPNQFAFDGKLQSIDFSMKIIEETEAEWKDLVGGKTKSSLSVVNTTLNDSNTVTADVAAQKLNF.

Diphosphate is bound at residue arginine 100. Positions 132, 137, and 169 each coordinate Mg(2+).

It belongs to the PPase family. The cofactor is Mg(2+).

The catalysed reaction is diphosphate + H2O = 2 phosphate + H(+). This Dictyostelium discoideum (Social amoeba) protein is Inorganic pyrophosphatase (ppa1).